Here is a 256-residue protein sequence, read N- to C-terminus: Geranylgeranylglyceryl phosphate synthase (256 aa).

Positions 28 and 53 each coordinate Mg(2+). Residues 172 to 178 (YLEAGSG), 203 to 204 (GG), and 225 to 226 (GT) each bind sn-glycerol 1-phosphate.

This sequence belongs to the GGGP/HepGP synthase family. Group II subfamily. Mg(2+) serves as cofactor.

It is found in the cytoplasm. The enzyme catalyses sn-glycerol 1-phosphate + (2E,6E,10E)-geranylgeranyl diphosphate = sn-3-O-(geranylgeranyl)glycerol 1-phosphate + diphosphate. Its pathway is membrane lipid metabolism; glycerophospholipid metabolism. Prenyltransferase that catalyzes the transfer of the geranylgeranyl moiety of geranylgeranyl diphosphate (GGPP) to the C3 hydroxyl of sn-glycerol-1-phosphate (G1P). This reaction is the first ether-bond-formation step in the biosynthesis of archaeal membrane lipids. This Methanococcus maripaludis (strain C7 / ATCC BAA-1331) protein is Geranylgeranylglyceryl phosphate synthase.